The primary structure comprises 245 residues: Small ribosomal subunit protein uS3 (245 aa).

Residues Leu21–Ala92 form the KH type-2 domain. Residues Glu215 to Ala245 form a disordered region.

Belongs to the universal ribosomal protein uS3 family.

It is found in the cytoplasm. The protein resides in the nucleus. The protein localises to the nucleolus. It localises to the mitochondrion inner membrane. Its subcellular location is the cytoskeleton. It is found in the spindle. The catalysed reaction is 2'-deoxyribonucleotide-(2'-deoxyribose 5'-phosphate)-2'-deoxyribonucleotide-DNA = a 3'-end 2'-deoxyribonucleotide-(2,3-dehydro-2,3-deoxyribose 5'-phosphate)-DNA + a 5'-end 5'-phospho-2'-deoxyribonucleoside-DNA + H(+). Its function is as follows. Component of the small ribosomal subunit. The ribosome is a large ribonucleoprotein complex responsible for the synthesis of proteins in the cell. Has endonuclease activity and plays a role in repair of damaged DNA. Also involved in other processes including regulation of transcription, translation of its cognate mRNA, spindle formation and chromosome movement during mitosis, and apoptosis. This Ictalurus punctatus (Channel catfish) protein is Small ribosomal subunit protein uS3 (rps3).